The sequence spans 444 residues: N-succinylarginine dihydrolase (444 aa).

Residues 19–28, asparagine 110, and 137–138 contribute to the substrate site; these read AGLSFGNVAS and HR. Glutamate 174 is a catalytic residue. Arginine 214 is a substrate binding site. Histidine 250 is a catalytic residue. The substrate site is built by aspartate 252 and asparagine 362. Cysteine 368 (nucleophile) is an active-site residue.

Belongs to the succinylarginine dihydrolase family. As to quaternary structure, homodimer.

The enzyme catalyses N(2)-succinyl-L-arginine + 2 H2O + 2 H(+) = N(2)-succinyl-L-ornithine + 2 NH4(+) + CO2. Its pathway is amino-acid degradation; L-arginine degradation via AST pathway; L-glutamate and succinate from L-arginine: step 2/5. Its function is as follows. Catalyzes the hydrolysis of N(2)-succinylarginine into N(2)-succinylornithine, ammonia and CO(2). The polypeptide is N-succinylarginine dihydrolase (Shewanella frigidimarina (strain NCIMB 400)).